The chain runs to 305 residues: GTPase Era (305 aa).

An Era-type G domain is found at 13-181 (RCGYVAIVGR…EKLVAERLPE (169 aa)). The interval 21–28 (GRPNVGKS) is G1. 21–28 (GRPNVGKS) contributes to the GTP binding site. Residues 47–51 (QTTRH) are G2. Positions 68–71 (DTPG) are G3. Residues 68-72 (DTPGL) and 130-133 (NKTD) each bind GTP. The tract at residues 130-133 (NKTD) is G4. The interval 160-162 (ISA) is G5. The 85-residue stretch at 204–288 (VREKIMRQLG…MLNLWVKVKG (85 aa)) folds into the KH type-2 domain.

It belongs to the TRAFAC class TrmE-Era-EngA-EngB-Septin-like GTPase superfamily. Era GTPase family. Monomer.

Its subcellular location is the cytoplasm. The protein resides in the cell inner membrane. In terms of biological role, an essential GTPase that binds both GDP and GTP, with rapid nucleotide exchange. Plays a role in 16S rRNA processing and 30S ribosomal subunit biogenesis and possibly also in cell cycle regulation and energy metabolism. The sequence is that of GTPase Era from Pseudomonas aeruginosa (strain LESB58).